The sequence spans 258 residues: uncharacterized protein (258 aa).

The first 19 residues, 1-19 (MVGILPLCCSGCVPSLCCS), serve as a signal peptide directing secretion. Transmembrane regions (helical) follow at residues 94-114 (GLLL…NWTG), 197-217 (CLIL…LPYI), and 219-239 (PGLS…SSLV).

The protein localises to the membrane. This is an uncharacterized protein from Homo sapiens (Human).